Reading from the N-terminus, the 297-residue chain is Elongation factor Ts (297 aa).

Positions 82-85 are involved in Mg(2+) ion dislocation from EF-Tu; it reads TDFV.

It belongs to the EF-Ts family.

It is found in the cytoplasm. Its function is as follows. Associates with the EF-Tu.GDP complex and induces the exchange of GDP to GTP. It remains bound to the aminoacyl-tRNA.EF-Tu.GTP complex up to the GTP hydrolysis stage on the ribosome. This Azoarcus sp. (strain BH72) protein is Elongation factor Ts.